We begin with the raw amino-acid sequence, 185 residues long: Ribosome-recycling factor (185 aa).

The protein belongs to the RRF family.

The protein resides in the cytoplasm. Its function is as follows. Responsible for the release of ribosomes from messenger RNA at the termination of protein biosynthesis. May increase the efficiency of translation by recycling ribosomes from one round of translation to another. This chain is Ribosome-recycling factor, found in Mycobacterium avium (strain 104).